Reading from the N-terminus, the 1034-residue chain is Teashirt homolog 2 (1034 aa).

Residues 1–90 (MPRRKQQAPK…NESLLSDASD (90 aa)) are disordered. The stretch at 13–38 (AGYAQEEQLKEEEEIKEEEEEEDSGS) forms a coiled coil. The span at 21–36 (LKEEEEIKEEEEEEDS) shows a compositional bias: acidic residues. A compositionally biased stretch (polar residues) spans 65–90 (SYQNSPGSHLSNQDAENESLLSDASD). A Glycyl lysine isopeptide (Lys-Gly) (interchain with G-Cter in SUMO2) cross-link involves residue K188. 2 consecutive C2H2-type zinc fingers follow at residues 215 to 239 (FRCR…ETGH) and 275 to 299 (LKCM…KTKH). Positions 239-265 (HYQDDNRKKDKLRPTSYSKPRKRAFQD) are disordered. Glycyl lysine isopeptide (Lys-Gly) (interchain with G-Cter in SUMO2) cross-links involve residues K306 and K315. Residues 380–404 (LKCMECGSSHDTLQQLTTHMMVTGH) form a C2H2-type 3; atypical zinc finger. A Glycyl lysine isopeptide (Lys-Gly) (interchain with G-Cter in SUMO2) cross-link involves residue K417. Residues 432-455 (LSEAPNSDSLAPKPSSNSASDCTA) show a composition bias toward polar residues. The segment at 432 to 496 (LSEAPNSDSL…PLQKPLDPTI (65 aa)) is disordered. Residues 459 to 482 (ELKKESKKERPEETSKDEKVVKSE) are compositionally biased toward basic and acidic residues. Residues K461, K480, K497, K601, and K652 each participate in a glycyl lysine isopeptide (Lys-Gly) (interchain with G-Cter in SUMO2) cross-link. Disordered regions lie at residues 598 to 676 (TQVK…TSAL) and 763 to 789 (QPID…PPQK). The segment covering 600 to 668 (VKKESEDKDE…KEGSEKEKPQ (69 aa)) has biased composition (basic and acidic residues). Glycyl lysine isopeptide (Lys-Gly) (interchain with G-Cter in SUMO2) cross-links involve residues K800 and K820. Residues 841–911 (RKGRQSNWNP…NVKYQLRKTG (71 aa)) constitute a DNA-binding region (homeobox; atypical). Residues 926-948 (FYCSDCASQFRTPSTYISHLESH) form a C2H2-type 4 zinc finger. A Glycyl lysine isopeptide (Lys-Gly) (interchain with G-Cter in SUMO2) cross-link involves residue K966. Position 980 is a phosphoserine (S980). Residues 994 to 1017 (FKCKLCCRTFVSKHAVKLHLSKTH) form a C2H2-type 5 zinc finger. The tract at residues 1014-1034 (SKTHSKSPEHHSQFVTDVDEE) is disordered.

This sequence belongs to the teashirt C2H2-type zinc-finger protein family. Interacts (via homeobox domain) with APBB1 (via PID domain 1). Sumoylated. Expressed in brain; strongly reduced in post-mortem elderly subjects with Alzheimer disease.

It localises to the nucleus. Its function is as follows. Probable transcriptional regulator involved in developmental processes. May act as a transcriptional repressor (Potential). This Homo sapiens (Human) protein is Teashirt homolog 2 (TSHZ2).